Consider the following 257-residue polypeptide: MTKVIEALSDWQSIRKTINDLSVGFVPTMGNLHAGHLSLLERSKCENTITVLSLFINPTQFNNKNDFKNYPRTLAQDIAMAEENGIDYVLAPTDDALYPDQYAYKITNSTINNQEAEFRPRHFDGVLTVVMKLLLLVKPTRAYFGEKDYQQLQLVKGLAEAFFLDTEIIGCKIVRNEFGLPLSSRNRRLTEDQYQLAQRFSEIFHSDLSCDEIKNALIQEGIIVDYIEDYNERRFAAVHVGDIRLIDNIPFAKDKKC.

Met29 to His36 provides a ligand contact to ATP. The active-site Proton donor is the His36. Gln60 contributes to the (R)-pantoate binding site. Position 60 (Gln60) interacts with beta-alanine. Residue Gly145–Asp148 participates in ATP binding. Gln151 serves as a coordination point for (R)-pantoate. ATP is bound by residues Val174 and Leu182 to Arg185.

It belongs to the pantothenate synthetase family. Homodimer.

The protein resides in the cytoplasm. The enzyme catalyses (R)-pantoate + beta-alanine + ATP = (R)-pantothenate + AMP + diphosphate + H(+). The protein operates within cofactor biosynthesis; (R)-pantothenate biosynthesis; (R)-pantothenate from (R)-pantoate and beta-alanine: step 1/1. In terms of biological role, catalyzes the condensation of pantoate with beta-alanine in an ATP-dependent reaction via a pantoyl-adenylate intermediate. This Coxiella burnetii (strain Dugway 5J108-111) protein is Pantothenate synthetase.